A 120-amino-acid polypeptide reads, in one-letter code: Large ribosomal subunit protein eL18 (120 aa).

Belongs to the eukaryotic ribosomal protein eL18 family.

This Pyrococcus horikoshii (strain ATCC 700860 / DSM 12428 / JCM 9974 / NBRC 100139 / OT-3) protein is Large ribosomal subunit protein eL18.